Reading from the N-terminus, the 699-residue chain is Elongation factor G (699 aa).

In terms of domain architecture, tr-type G spans 8 to 283; it reads EHIRNIGICA…AVVDFLPSPI (276 aa). GTP is bound by residues 17 to 24, 81 to 85, and 135 to 138; these read AHIDAGKT, DTPGH, and NKMD.

Belongs to the TRAFAC class translation factor GTPase superfamily. Classic translation factor GTPase family. EF-G/EF-2 subfamily.

Its subcellular location is the cytoplasm. Functionally, catalyzes the GTP-dependent ribosomal translocation step during translation elongation. During this step, the ribosome changes from the pre-translocational (PRE) to the post-translocational (POST) state as the newly formed A-site-bound peptidyl-tRNA and P-site-bound deacylated tRNA move to the P and E sites, respectively. Catalyzes the coordinated movement of the two tRNA molecules, the mRNA and conformational changes in the ribosome. The protein is Elongation factor G of Rickettsia felis (strain ATCC VR-1525 / URRWXCal2) (Rickettsia azadi).